A 116-amino-acid chain; its full sequence is ATP synthase lipid-binding protein, mitochondrial (116 aa).

The transit peptide at 1–24 (MYCQRLALPLTRSLLASRAPLALR) directs the protein to the mitochondrion. A helical transmembrane segment spans residues 57-77 (VGVAGSGAGIGNVFGALVIGY). Lys84 carries the N6,N6,N6-trimethyllysine modification. Residues 92–112 (ILGFALSEAMGLFCLTMGFMI) traverse the membrane as a helical segment.

Belongs to the ATPase C chain family. In terms of assembly, F-type ATPases have 2 components, CF(1) - the catalytic core - and CF(0) - the membrane proton channel. CF(1) has five subunits: alpha(3), beta(3), gamma(1), delta(1), epsilon(1). CF(0) has three main subunits: a, b and c. Post-translationally, trimethylated by ATPSCKMT at Lys-84. Methylation may be required for proper incorporation of the C subunit into the ATP synthase complex and mitochondrial respiration.

The protein localises to the mitochondrion membrane. Mitochondrial membrane ATP synthase (F(1)F(0) ATP synthase or Complex V) produces ATP from ADP in the presence of a proton gradient across the membrane which is generated by electron transport complexes of the respiratory chain. F-type ATPases consist of two structural domains, F(1) - containing the extramembraneous catalytic core and F(0) - containing the membrane proton channel, linked together by a central stalk and a peripheral stalk. During catalysis, ATP synthesis in the catalytic domain of F(1) is coupled via a rotary mechanism of the central stalk subunits to proton translocation. Part of the complex F(0) domain. A homomeric c-ring of probably 10 subunits is part of the complex rotary element. The protein is ATP synthase lipid-binding protein, mitochondrial of Caenorhabditis briggsae.